Here is a 701-residue protein sequence, read N- to C-terminus: Reverse gyrase subunit A (701 aa).

Residues 41–197 enclose the Toprim domain; the sequence is MVLFIVESPN…NIYRAEFHEV (157 aa). A Mg(2+)-binding site is contributed by glutamate 47. The segment at 117–143 adopts an RG C-terminal-type zinc-finger fold; sequence IKKCLDCGHQFVDEDKCPRCGSENIDD. The Zn(2+) site is built by cysteine 120, cysteine 123, cysteine 133, and cysteine 136. Aspartate 166 serves as a coordination point for Mg(2+). The 390-residue stretch at 213 to 602 folds into the Topo IA-type catalytic domain; the sequence is NTNRVKAQLV…SFKKELIEIW (390 aa). Residue tyrosine 352 is the O-(5'-phospho-DNA)-tyrosine intermediate of the active site.

This sequence belongs to the type IA topoisomerase family. As to quaternary structure, heterodimer of an RgyA and RgyB subunit. The cofactor is Zn(2+). It depends on Mg(2+) as a cofactor.

It localises to the cytoplasm. Modifies the topological state of DNA by introducing positive supercoils in an ATP-dependent process. Binds to single-stranded DNA, transiently cleaves and then rejoins the end, introducing a positive supercoil in the process. The scissile phosphodiester is attacked by the catalytic tyrosine of the enzyme, resulting in the formation of a DNA-(5'-phosphotyrosyl)-enzyme intermediate. Probably involved in rewinding DNA strands in regions of the chromosome that have opened up to allow replication, transcription, DNA repair or for DNA protection. Reconstituted holoenzyme binds dsDNA a bit better than ssDNA, this subunit preferentially binds ssDNA. In isolation this subunit relaxes negatively-supercoiled DNA, and stimulates the endogenous ATPase activity of the RgyB subunit. This chain is Reverse gyrase subunit A, found in Nanoarchaeum equitans (strain Kin4-M).